The following is a 68-amino-acid chain: Alpha-conotoxin PIVA (68 aa).

Positions 1–16 (MFTVFLLVVLATTVVS) are cleaved as a signal peptide. Residues 17–41 (FTSDRASDDRNTNDKASRLLSHVVR) constitute a propeptide that is removed on maturation. 3 disulfide bridges follow: C43/C57, C44/C52, and C55/C64. P48 and P54 each carry 4-hydroxyproline; partial. P61 carries the 4-hydroxyproline modification. Q66 bears the Glutamine amide mark.

The protein belongs to the conotoxin A superfamily. Expressed by the venom duct.

It localises to the secreted. Alpha-conotoxins act on postsynaptic membranes, they bind to the nicotinic acetylcholine receptors (nAChR) and thus inhibit them. This toxin has higher affinity for the adult subtype (alpha-1-beta-1-gamma-delta (CHRNA1-CHRNB1-CHRNG-CHRND) subunits) (IC(50)=2.3 nM) of the receptor than for the fetal subtype (alpha-1-beta-1-epsilon-delta (CHRNA1-CHRNB1-CHRND-CHRNE) subunits) (IC(50)=22 nM). This chain is Alpha-conotoxin PIVA, found in Conus purpurascens (Purple cone).